Consider the following 232-residue polypeptide: Ubiquinone biosynthesis O-methyltransferase (232 aa).

Positions 36, 55, 76, and 120 each coordinate S-adenosyl-L-methionine.

Belongs to the methyltransferase superfamily. UbiG/COQ3 family.

The enzyme catalyses a 3-demethylubiquinol + S-adenosyl-L-methionine = a ubiquinol + S-adenosyl-L-homocysteine + H(+). The catalysed reaction is a 3-(all-trans-polyprenyl)benzene-1,2-diol + S-adenosyl-L-methionine = a 2-methoxy-6-(all-trans-polyprenyl)phenol + S-adenosyl-L-homocysteine + H(+). It functions in the pathway cofactor biosynthesis; ubiquinone biosynthesis. Functionally, O-methyltransferase that catalyzes the 2 O-methylation steps in the ubiquinone biosynthetic pathway. The sequence is that of Ubiquinone biosynthesis O-methyltransferase from Burkholderia ambifaria (strain MC40-6).